We begin with the raw amino-acid sequence, 421 residues long: Nacrein-like protein M (421 aa).

A glycan (N-linked (GlcNAc...) asparagine) is linked at Asn-27. Residues 33 to 420 form the Alpha-carbonic anhydrase domain; the sequence is AGFSYDRSIC…KNKVTVYKSF (388 aa). Residues His-132, His-134, and His-157 each contribute to the Zn(2+) site. Residues 197 to 206 are compositionally biased toward acidic residues; the sequence is DGFGDEPDDE. Residues 197 to 303 form a disordered region; it reads DGFGDEPDDE…GENGHKHGCR (107 aa). A compositionally biased stretch (basic and acidic residues) spans 207 to 219; sequence ECKRILKGHHPDN. Low complexity predominate over residues 220-295; that stretch reads NENGNGDNGN…NNGDNGNNGE (76 aa). 24 tandem repeats follow at residues 225 to 227, 228 to 230, 231 to 233, 234 to 236, 237 to 239, 240 to 242, 243 to 245, 246 to 248, 249 to 251, 252 to 254, 255 to 257, 258 to 260, 261 to 263, 264 to 266, 267 to 269, 270 to 272, 273 to 275, 276 to 278, 279 to 281, 282 to 284, 285 to 287, 288 to 290, 291 to 292, and 294 to 296. Positions 225–296 are 24 X 3 AA approximate tandem repeats of G-X-N; that stretch reads GDNGNNGYNG…NGDNGNNGEN (72 aa). 361-362 contacts substrate; sequence TT.

This sequence belongs to the alpha-carbonic anhydrase family. As to quaternary structure, homooligomer; disulfide-linked. May also be disulfide-linked to insoluble organic matrix. Zn(2+) serves as cofactor. In terms of tissue distribution, expressed in the mantle.

It localises to the secreted. The protein resides in the extracellular space. Its subcellular location is the extracellular matrix. The enzyme catalyses hydrogencarbonate + H(+) = CO2 + H2O. Its function is as follows. Acts as a negative regulator for calcification in the shells of mollusks. May function both as a calcium concentrator and as a carbonic anhydrase required for production of carbonate ions, which are assembled to CaCO(3) at mineralization sites. Is important for shell formation in both the calcitic prismatic layer and the aragonitic nacreous layerr. Shows inhibitory activity of crystal formation when present in free state but, when attached to the insoluble matrix, may regulate the form and size of aragonite crystal. In Pinctada maxima (Silver-lipped pearl oyster), this protein is Nacrein-like protein M.